A 486-amino-acid polypeptide reads, in one-letter code: Cobyric acid synthase (486 aa).

Positions Arg-251 to Ala-439 constitute a GATase cobBQ-type domain. Catalysis depends on Cys-333, which acts as the Nucleophile. His-431 is a catalytic residue.

Belongs to the CobB/CobQ family. CobQ subfamily.

The protein operates within cofactor biosynthesis; adenosylcobalamin biosynthesis. Its function is as follows. Catalyzes amidations at positions B, D, E, and G on adenosylcobyrinic A,C-diamide. NH(2) groups are provided by glutamine, and one molecule of ATP is hydrogenolyzed for each amidation. The polypeptide is Cobyric acid synthase (Caulobacter sp. (strain K31)).